The primary structure comprises 216 residues: Protein-L-isoaspartate O-methyltransferase (216 aa).

Ser-61 is an active-site residue.

It belongs to the methyltransferase superfamily. L-isoaspartyl/D-aspartyl protein methyltransferase family.

Its subcellular location is the cytoplasm. The catalysed reaction is [protein]-L-isoaspartate + S-adenosyl-L-methionine = [protein]-L-isoaspartate alpha-methyl ester + S-adenosyl-L-homocysteine. Its function is as follows. Catalyzes the methyl esterification of L-isoaspartyl residues in peptides and proteins that result from spontaneous decomposition of normal L-aspartyl and L-asparaginyl residues. It plays a role in the repair and/or degradation of damaged proteins. The polypeptide is Protein-L-isoaspartate O-methyltransferase (Dinoroseobacter shibae (strain DSM 16493 / NCIMB 14021 / DFL 12)).